Consider the following 473-residue polypeptide: Glycine receptor subunit beta-type 4 (473 aa).

Residues 1–19 form the signal peptide; sequence MHSLFLKILIYSLMQCVLG. The Extracellular portion of the chain corresponds to 20-249; that stretch reads QAEFWDYDEN…EFHVDREITH (230 aa). N29, N105, and N151 each carry an N-linked (GlcNAc...) asparagine glycan. A disulfide bond links C166 and C180. A helical transmembrane segment spans residues 250–271; it reads HIIQSYIPTSLIVIISWFSFWL. Residues 272–276 lie on the Cytoplasmic side of the membrane; that stretch reads DVEAV. Residues 277-297 traverse the membrane as a helical segment; that stretch reads PGRVSLSITTLLTLATQSSAA. Topologically, residues 298–308 are extracellular; the sequence is RMALPQASDVK. The helical transmembrane segment at 309-329 threads the bilayer; it reads AIDVWMGTCMAFVFSAMIEFT. Topologically, residues 330–439 are cytoplasmic; the sequence is VVNYCVRRKV…NRKNAQKIDR (110 aa). Residues 440 to 460 form a helical membrane-spanning segment; that stretch reads YSRALFPLAFIIFNIFYWIYY. The Extracellular segment spans residues 461–473; it reads LKYAGSNSPELLL.

Belongs to the ligand-gated ion channel (TC 1.A.9) family. Glycine receptor (TC 1.A.9.3) subfamily. As to quaternary structure, pentamer.

The protein resides in the postsynaptic cell membrane. It localises to the synapse. The protein localises to the cell membrane. Glycine receptors are ligand-gated chloride channels. Channel opening is triggered by extracellular glycine. Contributes to the generation of inhibitory postsynaptic currents. The chain is Glycine receptor subunit beta-type 4 from Caenorhabditis elegans.